Here is a 443-residue protein sequence, read N- to C-terminus: Threonine/serine transporter TdcC (443 aa).

11 helical membrane passes run 22-42, 44-64, 97-117, 140-160, 163-183, 207-227, 261-281, 319-339, 366-386, 389-409, and 423-443; these read TTWT…FFPI, AGFG…PIAF, GVVI…IYGV, FVAL…KDLM, VMSY…LSLI, ILVT…FSPI, MLMV…LSPA, ASII…LGTL, ISMI…PNIL, IEAM…MYAI, and DNVF…YKLF.

This sequence belongs to the amino acid/polyamine transporter 2 family. SdaC/TdcC subfamily.

Its subcellular location is the cell inner membrane. It carries out the reaction L-threonine(in) + H(+)(in) = L-threonine(out) + H(+)(out). It catalyses the reaction L-serine(in) + H(+)(in) = L-serine(out) + H(+)(out). Functionally, involved in the import of threonine and serine into the cell, with the concomitant import of a proton (symport system). This chain is Threonine/serine transporter TdcC, found in Citrobacter koseri (strain ATCC BAA-895 / CDC 4225-83 / SGSC4696).